Consider the following 79-residue polypeptide: Dermaseptin-S8 (79 aa).

The N-terminal stretch at 1–22 (MDILKKSLFLVLFLGLVSLSIC) is a signal peptide. Residues 23–45 (EEEKRENEDEEKQEDDEQSEMKR) constitute a propeptide that is removed on maturation. Glutamine amide is present on Gln-76. A propeptide spanning residues 78–79 (AQ) is cleaved from the precursor.

It belongs to the frog skin active peptide (FSAP) family. Dermaseptin subfamily. As to expression, expressed by the skin glands.

It is found in the secreted. Functionally, potent antimicrobial peptide with activity against bacteria, fungi and protozoa. Probably acts by disturbing membrane functions with its amphipathic structure. This is Dermaseptin-S8 from Phyllomedusa sauvagei (Sauvage's leaf frog).